A 1074-amino-acid chain; its full sequence is Calcium-transporting ATPase 8, plasma membrane-type (1074 aa).

The interval 1–33 (MTSLLKSSPGRRRGGDVESGKSEHADSDSDTFY) is disordered. Topologically, residues 1 to 180 (MTSLLKSSPG…NTYPRKKGKG (180 aa)) are cytoplasmic. Residues 13–27 (RGGDVESGKSEHADS) show a composition bias toward basic and acidic residues. Residues 43–54 (RLQQWRKAALVL) form an interaction with calmodulin region. Residues 181-201 (FLRFLWDACHDLTLIILMVAA) form a helical membrane-spanning segment. The Extracellular portion of the chain corresponds to 202 to 219 (VASLALGIKTEGIKEGWY). Residues 220-240 (DGGSIAFAVILVIVVTAVSDY) traverse the membrane as a helical segment. The Cytoplasmic segment spans residues 241 to 369 (KQSLQFQNLN…GEETPLQVRL (129 aa)). The chain crosses the membrane as a helical span at residues 370–389 (NGVATFIGSIGLAVAAAVLV). At 390–426 (ILLTRYFTGHTKDNNGGPQFVKGKTKVGHVIDDVVKV) the chain is on the extracellular side. Residues 427–444 (LTVAVTIVVVAVPEGLPL) form a helical membrane-spanning segment. At 445–840 (AVTLTLAYSM…RWGRSVYANI (396 aa)) the chain is on the cytoplasmic side. Catalysis depends on Asp482, which acts as the 4-aspartylphosphate intermediate. Mg(2+)-binding residues include Asp785 and Asp789. The helical transmembrane segment at 841–859 (QKFIQFQLTVNVAALVINV) threads the bilayer. The Extracellular portion of the chain corresponds to 860–870 (VAAISSGDVPL). A helical membrane pass occupies residues 871 to 891 (TAVQLLWVNLIMDTLGALALA). Over 892 to 911 (TEPPTDHLMGRPPVGRKEPL) the chain is Cytoplasmic. The chain crosses the membrane as a helical span at residues 912–934 (ITNIMWRNLLIQAIYQVSVLLTL). Residues 935–949 (NFRGISILGLEHEVH) lie on the Extracellular side of the membrane. A helical transmembrane segment spans residues 950 to 971 (EHATRVKNTIIFNAFVLCQAFN). Residues 972-989 (EFNARKPDEKNIFKGVIK) are Cytoplasmic-facing. A helical membrane pass occupies residues 990 to 1011 (NRLFMGIIVITLVLQVIIVEFL). Residues 1012 to 1021 (GKFASTTKLN) lie on the Extracellular side of the membrane. Residues 1022–1043 (WKQWLICVGIGVISWPLALVGK) traverse the membrane as a helical segment. The Cytoplasmic segment spans residues 1044 to 1074 (FIPVPAAPISNKLKVLKFWGKKKNSSGEGSL).

The protein belongs to the cation transport ATPase (P-type) (TC 3.A.3) family. Type IIB subfamily.

It is found in the cell membrane. It catalyses the reaction Ca(2+)(in) + ATP + H2O = Ca(2+)(out) + ADP + phosphate + H(+). Activated by calmodulin. In terms of biological role, this magnesium-dependent enzyme catalyzes the hydrolysis of ATP coupled with the translocation of calcium from the cytosol out of the cell. This is Calcium-transporting ATPase 8, plasma membrane-type (ACA8) from Arabidopsis thaliana (Mouse-ear cress).